A 92-amino-acid chain; its full sequence is Phospholemman (92 aa).

The N-terminal stretch at 1–20 (MASPGHILIVCVCLLSMASA) is a signal peptide. The Extracellular segment spans residues 21–35 (EAPQEPDPFTYDYHT). A helical membrane pass occupies residues 36 to 56 (LRIGGLTIAGILFILGILIIL). The Cytoplasmic portion of the chain corresponds to 57–92 (SKRCRCKFNQQQRTGEPDEEEGTFRSSIRRLSTRRR). Residue C60 is the site of S-palmitoyl cysteine attachment. S-glutathionyl cysteine; alternate is present on C62. C62 carries S-palmitoyl cysteine; alternate lipidation. The tract at residues 66 to 92 (QQQRTGEPDEEEGTFRSSIRRLSTRRR) is disordered. The residue at position 79 (T79) is a Phosphothreonine. Position 82 is a phosphoserine (S82). S83 carries the post-translational modification Phosphoserine; by PKA and PKC. A compositionally biased stretch (basic residues) spans 83 to 92 (SIRRLSTRRR). Residue S88 is modified to Phosphoserine; by PKA. T89 is modified (phosphothreonine; by PKC).

Belongs to the FXYD family. Homotetramer. Monomer. Regulatory subunit of the sodium/potassium-transporting ATPase (NKA) which is composed of a catalytic alpha subunit, a non-catalytic beta subunit and an additional regulatory subunit. The monomeric form associates with NKA while the oligomeric form does not. Interacts with the catalytic alpha-1 subunit ATP1A1. Also interacts with the catalytic alpha-2 and alpha-3 subunits ATP1A2 and ATP1A3. Very little interaction with ATP1A1, ATP1A2 or ATP1A3 when phosphorylated at Ser-83. Interacts with the non-catalytic beta-1 subunit ATP1B1. Oxidative stress decreases interaction with ATP1A1 but increases interaction with ATP1B1. In terms of processing, major plasma membrane substrate for cAMP-dependent protein kinase (PKA) and protein kinase C (PKC) in several different tissues. Phosphorylated in response to insulin and adrenergic stimulation. Phosphorylation at Ser-88 stimulates sodium/potassium-transporting ATPase activity while the unphosphorylated form inhibits sodium/potassium-transporting ATPase activity. Phosphorylation increases tetramerization, decreases binding to ATP1A1 and reduces inhibition of ATP1A1 activity. Phosphorylation at Ser-83 leads to greatly reduced interaction with ATP1A1, ATP1A2 and ATP1A3. May be phosphorylated by DMPK. Palmitoylation increases half-life and stability and is enhanced upon phosphorylation at Ser-88 by PKA. In terms of tissue distribution, in adult brain, highest levels are found in the cerebellum and in the lateral, third and fourth ventricles of the choroid plexus (at protein level). Also detected in cells of a portion of the ependymal lining of the lateral ventricle on its rostral surface posterior to the caudate putamen (at protein level). Expressed in a subset of neurons which secrete gonadotropin-releasing hormone.

The protein localises to the cell membrane. Its subcellular location is the sarcolemma. The protein resides in the apical cell membrane. It is found in the membrane. It localises to the caveola. The protein localises to the T-tubule. In terms of biological role, associates with and regulates the activity of the sodium/potassium-transporting ATPase (NKA) which transports Na(+) out of the cell and K(+) into the cell. Inhibits NKA activity in its unphosphorylated state and stimulates activity when phosphorylated. Reduces glutathionylation of the NKA beta-1 subunit ATP1B1, thus reversing glutathionylation-mediated inhibition of ATP1B1. Contributes to female sexual development by maintaining the excitability of neurons which secrete gonadotropin-releasing hormone. This chain is Phospholemman, found in Rattus norvegicus (Rat).